A 367-amino-acid polypeptide reads, in one-letter code: THO complex subunit 6 (367 aa).

WD repeat units follow at residues 23–67, 88–129, 157–196, 199–240, 243–283, 285–322, and 324–363; these read IETR…SQSA, AHEG…ESDV, SPMP…IKMT, GHSD…KVIG, DKKS…CVQT, PIPA…LSQI, and CAPC…CTFR.

This sequence belongs to the WD repeat THOC6 family. As to quaternary structure, component of the THO complex, which is composed of THO1, THO2, THO3, THO5, THO6 and THO7. Interacts with ABI5, DDB1A and DWA2.

The protein resides in the nucleus. Its pathway is protein modification; protein ubiquitination. Its function is as follows. Acts as a component of the THO subcomplex of the TREX complex which is thought to couple mRNA transcription, processing and nuclear export. Component of the CUL4-RBX1-DDB1-DWA1/DWA2 E3 ubiquitin-protein ligase complex that acts as a negative regulator in abscisic acid (ABA) signaling. May function as the substrate recognition module within this complex leading to ABI5 degradation. Functionally redundant with DWA2. The protein is THO complex subunit 6 (THO6) of Arabidopsis thaliana (Mouse-ear cress).